Here is a 152-residue protein sequence, read N- to C-terminus: Protein-export protein SecB (152 aa).

It belongs to the SecB family. As to quaternary structure, homotetramer, a dimer of dimers. One homotetramer interacts with 1 SecA dimer.

Its subcellular location is the cytoplasm. In terms of biological role, one of the proteins required for the normal export of preproteins out of the cell cytoplasm. It is a molecular chaperone that binds to a subset of precursor proteins, maintaining them in a translocation-competent state. It also specifically binds to its receptor SecA. This is Protein-export protein SecB from Rickettsia typhi (strain ATCC VR-144 / Wilmington).